Here is a 377-residue protein sequence, read N- to C-terminus: Nitric oxide reductase FlRd-NAD(+) reductase (377 aa).

It belongs to the FAD-dependent oxidoreductase family. FAD is required as a cofactor.

It is found in the cytoplasm. The catalysed reaction is 2 reduced [nitric oxide reductase rubredoxin domain] + NAD(+) + H(+) = 2 oxidized [nitric oxide reductase rubredoxin domain] + NADH. Its pathway is nitrogen metabolism; nitric oxide reduction. In terms of biological role, one of at least two accessory proteins for anaerobic nitric oxide (NO) reductase. Reduces the rubredoxin moiety of NO reductase. This chain is Nitric oxide reductase FlRd-NAD(+) reductase, found in Escherichia coli O157:H7.